Here is a 317-residue protein sequence, read N- to C-terminus: Coproporphyrinogen-III oxidase, aerobic 1 (317 aa).

The interval 38–47 (VLRDGAIFEQ) is important for dimerization. Residue Ser82 participates in substrate binding. Residue His96 is the Proton donor of the active site. Substrate is bound by residues 98-100 (NYR) and 269-274 (NGRTES). An important for dimerization region spans residues 251 to 286 (YVEFNLVYDRGTIFGLQTNGRTESILMSLPPLVRWE).

This sequence belongs to the aerobic coproporphyrinogen-III oxidase family. In terms of assembly, homodimer.

It is found in the cytoplasm. It carries out the reaction coproporphyrinogen III + O2 + 2 H(+) = protoporphyrinogen IX + 2 CO2 + 2 H2O. It participates in porphyrin-containing compound metabolism; protoporphyrin-IX biosynthesis; protoporphyrinogen-IX from coproporphyrinogen-III (O2 route): step 1/1. Its function is as follows. Key enzyme in heme biosynthesis. Catalyzes the oxidative decarboxylation of propionic acid side chains of rings A and B of coproporphyrinogen III. This is Coproporphyrinogen-III oxidase, aerobic 1 from Nostoc sp. (strain PCC 7120 / SAG 25.82 / UTEX 2576).